The primary structure comprises 927 residues: Tubulin monoglycylase TTLL3 (927 aa).

Over residues 35 to 47 the composition is skewed to polar residues; it reads RSQPSELRTNFSS. Disordered stretches follow at residues 35 to 113 and 194 to 227; these read RSQP…PQPV and HPPGTALPAPQKDLDSSMLGDSDATEDEDEEENE. Residues 216–226 show a composition bias toward acidic residues; sequence DATEDEDEEEN. A TTL domain is found at 345-702; that stretch reads VLKLVVKLEE…DRRLDRSCDT (358 aa). ATP is bound by residues Lys-476, 482 to 483, 514 to 517, 527 to 529, and 571 to 572; these read RG, QKYI, KFD, and CN. Residue Arg-482 participates in a protein binding. Mg(2+)-binding residues include Asp-649, Glu-662, and Asn-664. Position 662 (Glu-662) interacts with ATP. 2 disordered regions span residues 735–799 and 897–927; these read VPVG…SGKG and EEGHRQRAAPRPSSAPGKGLSSTEPCSKTET. Positions 752–769 are enriched in polar residues; the sequence is LTQQGSGESKDSGSPTHR. Over residues 776–788 the composition is skewed to basic and acidic residues; it reads ARAESLEHTEKPE. Positions 916 to 927 are enriched in polar residues; the sequence is LSSTEPCSKTET.

Requires Mg(2+) as cofactor. Highly expressed in brain and testis. Expressed in heart, kidney, liver, lung, muscle, spleen, trachea and colon. Expressed in sperm flagellum. In the brain, specifically expressed in ependymal cilia.

Its subcellular location is the cytoplasm. It localises to the cytoskeleton. The protein resides in the cell projection. It is found in the cilium. The protein localises to the cilium axoneme. Its subcellular location is the flagellum axoneme. The enzyme catalyses L-glutamyl-[protein] + glycine + ATP = glycyl-L-glutamyl-[protein] + ADP + phosphate + H(+). Monoglycylase which modifies alpha- and beta-tubulin, adding a single glycine on the gamma-carboxyl groups of specific glutamate residues to generate monoglycine side chains within the C-terminal tail of tubulin. Not involved in elongation step of the polyglycylation reaction. Preferentially glycylates a beta-tail peptide over the alpha-tail, although shifts its preference toward alpha-tail as beta-tail glutamylation increases. Competes with polyglutamylases for modification site on beta-tubulin substrate, thereby creating an anticorrelation between glycylation and glutamylation reactions. Together with TTLL8, mediates microtubule glycylation of primary and motile cilia, which is essential for their stability and maintenance. Involved in microtubule glycylation of primary cilia in colon which controls cell proliferation of epithelial cells and plays an essential role in colon cancer development. Together with TTLL8, glycylates sperm flagella which regulates axonemal dynein motor activity, thereby controlling flagellar beat, directional sperm swimming and male fertility. This chain is Tubulin monoglycylase TTLL3, found in Mus musculus (Mouse).